Consider the following 529-residue polypeptide: Delayed-rectifier potassium channel regulatory subunit KCNS1 (529 aa).

The Cytoplasmic segment spans residues 1-217; the sequence is MLMLLVRGTR…LTMENPGYSL (217 aa). The helical transmembrane segment at 218 to 239 threads the bilayer; sequence PSKLFSCVSISVVLASIAAMCI. At 240–270 the chain is on the extracellular side; it reads HSLPEYQAREAAAAVAAVAAGRSAEGVRDDP. A helical membrane pass occupies residues 271–293; the sequence is VLRRLEYFCIAWFSFEVSSRLLL. Topologically, residues 294–304 are cytoplasmic; that stretch reads APSTRNFFCHP. A helical membrane pass occupies residues 305–322; that stretch reads LNLIDIVSVLPFYLTLLA. Residues 323 to 340 are Extracellular-facing; that stretch reads GAALGDHGGTGGKEFGHL. A helical; Voltage-sensor transmembrane segment spans residues 341–361; sequence GKVVQVFRLMRIFRVLKLARH. At 362–376 the chain is on the cytoplasmic side; it reads STGLRSLGATLKHSY. A helical transmembrane segment spans residues 377–398; sequence REVGILLLYLAVGVSVFSGVAY. Topologically, residues 399–411 are extracellular; it reads TAEKEEHVGFDTI. The helical intramembrane region spans 412–423; the sequence is PACWWWGTVSMT. The Selectivity filter motif lies at 424-429; sequence TVGYGD. An intramembrane segment occupies 424 to 431; the sequence is TVGYGDVV. Residues 432 to 438 are Extracellular-facing; sequence PVTVAGK. Residues 439–467 traverse the membrane as a helical segment; sequence LAASGCILGGILVVALPITIIFNKFSHFY. Over 468–529 the chain is Cytoplasmic; it reads RRQKALEAAV…PSEPPHSQMY (62 aa). Positions 494–529 are disordered; the sequence is GVSEASLETSRETSQEGRSADLETQVPSEPPHSQMY. Positions 502–514 are enriched in basic and acidic residues; the sequence is TSRETSQEGRSAD.

This sequence belongs to the potassium channel family. S (TC 1.A.1.2) subfamily. Kv9.1/KCNS1 sub-subfamily. As to quaternary structure, heterotetramer with KCNB1. Heterotetramer with KCNB2. Does not form homomultimers.

Its subcellular location is the cell membrane. Potassium channel regulatory subunit that modulate the delayed rectifier voltage-gated potassium channel activity of KCNB1 and KCNB2 by altering their kinetics, expression levels, and shifting the half-inactivation potential to more polarized values. While it does not form functional channels on its own, it can form functional heterotetrameric channels with KCNB1 and KCNB2. Each regulatory subunit has unique regulatory properties that can lead to extensive inhibition, significant changes in kinetics, and/or substantial shifts in the voltage dependencies of the inactivation process. This is Delayed-rectifier potassium channel regulatory subunit KCNS1 from Aotus nancymaae (Ma's night monkey).